Consider the following 529-residue polypeptide: Probable E3 ubiquitin-protein ligase MGRN1 (529 aa).

Residues 275-314 (ECVVCLSDLRDTLILPCRHLCLCNACADTLRYQANNCPIC) form an RING-type zinc finger. 2 disordered regions span residues 341–362 (SPVL…IPPG) and 396–529 (EMGD…VEEC). Polar residues-rich tracts occupy residues 449 to 463 (AQPQ…SPSE) and 477 to 487 (NSGSESRSLGV). Residues 501–511 (SSLSQSESDPS) are compositionally biased toward low complexity. Residues 520 to 529 (ESWSTAVEEC) are compositionally biased toward polar residues.

In terms of processing, autoubiquitinated in vitro.

The catalysed reaction is S-ubiquitinyl-[E2 ubiquitin-conjugating enzyme]-L-cysteine + [acceptor protein]-L-lysine = [E2 ubiquitin-conjugating enzyme]-L-cysteine + N(6)-ubiquitinyl-[acceptor protein]-L-lysine.. Its pathway is protein modification; protein ubiquitination. Its function is as follows. E3 ubiquitin-protein ligase. Also acts as a negative regulator of hedgehog signaling. This chain is Probable E3 ubiquitin-protein ligase MGRN1 (mgrn1), found in Danio rerio (Zebrafish).